A 187-amino-acid polypeptide reads, in one-letter code: Small ribosomal subunit protein uS10m (187 aa).

The protein belongs to the universal ribosomal protein uS10 family. Component of the mitochondrial ribosome small subunit (28S) which comprises a 12S rRNA and about 30 distinct proteins.

The protein resides in the mitochondrion. The polypeptide is Small ribosomal subunit protein uS10m (mrps10) (Danio rerio (Zebrafish)).